The following is a 92-amino-acid chain: Small ribosomal subunit protein uS19 (92 aa).

This sequence belongs to the universal ribosomal protein uS19 family.

In terms of biological role, protein S19 forms a complex with S13 that binds strongly to the 16S ribosomal RNA. The polypeptide is Small ribosomal subunit protein uS19 (Nitrobacter winogradskyi (strain ATCC 25391 / DSM 10237 / CIP 104748 / NCIMB 11846 / Nb-255)).